A 186-amino-acid polypeptide reads, in one-letter code: Orotate phosphoribosyltransferase (186 aa).

Residues R96, K100, H102, and 121 to 129 (DDVATTGTS) contribute to the 5-phospho-alpha-D-ribose 1-diphosphate site. Residues T125 and R153 each contribute to the orotate site.

Belongs to the purine/pyrimidine phosphoribosyltransferase family. PyrE subfamily. As to quaternary structure, homodimer. Mg(2+) serves as cofactor.

It carries out the reaction orotidine 5'-phosphate + diphosphate = orotate + 5-phospho-alpha-D-ribose 1-diphosphate. Its pathway is pyrimidine metabolism; UMP biosynthesis via de novo pathway; UMP from orotate: step 1/2. In terms of biological role, catalyzes the transfer of a ribosyl phosphate group from 5-phosphoribose 1-diphosphate to orotate, leading to the formation of orotidine monophosphate (OMP). The chain is Orotate phosphoribosyltransferase from Aeropyrum pernix (strain ATCC 700893 / DSM 11879 / JCM 9820 / NBRC 100138 / K1).